The following is a 2925-amino-acid chain: TPR and ankyrin repeat-containing protein 1 (2925 aa).

TPR repeat units follow at residues 15-48 and 50-82; these read AVLLCNKSNAFFSLGKWNEAFVAAKECLQWDPTY and KGYYRAGYSLLRLHQPYEAARMFFEGLRLVQRS. ANK repeat units follow at residues 168-198, 203-232, 240-276, 463-492, 497-518, and 546-575; these read EKYVFIGLYEKMEQVPKLVQWLISIGASVET, PLHALMRLCIQARENHLFRWLMDHKPEWKG, DGCTVLHVVAAHSPGYLVKRQTEDVQMLLRFGADPTL, SQERPVVTCLKHEDFELAFLLLTKGADPRA, EGDTPLHAALHIFLEIKADIGF, and NGNTLMHILFQKGMLKRVKKLLDLLVKFDI. Disordered stretches follow at residues 612-669, 706-741, and 1077-1103; these read SRQD…LPGT, PEDCLQSSEPLEAGAGKEGKKDDKPTLGAGAPDCSE, and VEPGKESPGGEEEEEEEDEEEEDSIEV. Residues 624-641 are compositionally biased toward polar residues; that stretch reads SKSTAPGHTSQLKSQGSF. The segment covering 720–730 has biased composition (basic and acidic residues); that stretch reads AGKEGKKDDKP. Residues 1085–1103 are compositionally biased toward acidic residues; sequence GGEEEEEEEDEEEEDSIEV. TPR repeat units follow at residues 1699–1732 and 1793–1826; these read PAEWIAQGDYYAKHQCWKVAAKCYQKGGAFEKEK and LGKIRDAAYFYKRSQCYKDAFRCFEQIQEFDLAL. Residues 2301–2330 adopt a coiled-coil conformation; the sequence is EEFEKLLHQEEDNYNRELKALESEKDERGR.

The polypeptide is TPR and ankyrin repeat-containing protein 1 (TRANK1) (Homo sapiens (Human)).